Reading from the N-terminus, the 514-residue chain is MLRLVSWNINGIRSPLQGVRCEEPSSCSAMAMGRILDKLDADIVCLQETKVTRDVLTEPLAIIEGYNSYFSFSRNRSGYSGVATFCKDSATPVAAEEGLSGLLSTQNGDVGCYGNMDDFTQEELRALDSEGRALLTQHKICTWEGKEKTLTLINVYCPHADPGKPERLTFKMRFYRLLQIRAEALLAAGSHVIILGDLNTAHRPIDHWDAVNMECFEEDPGRKWMDGLLSNLGCESGSHMGPFIDSYRCFQPKQKGAFTCWSTVSGARHLNYGSRLDYVLGDRTLVIDTFQSSFLLPEVMGSDHCPVGAVLSVSSVPAKQCPPLCTCFLPEFAGTQLKILRFLVHFKQDPVFKQSALQPSNQTQVHMRKNKARVRSTRSRPSKTGSSRGQKNLMSYFQPSSSGPQTSNLDLPSLGTLITPKTSEEDVMANVVEGQTKASEAKDEKEIRTSFWKSLLGGPSPMPLCGGHREPCVMRTVKKPGPNLGRHFYMCARPQGPPTDPSSRCNFFLWSRPS.

Residues N8 and E48 each contribute to the Mg(2+) site. Y156 is a catalytic residue. Mg(2+)-binding residues include D197, N199, D303, and H304. Catalysis depends on D197, which acts as the Proton donor/acceptor. The active-site Proton acceptor is the H304. The segment at 359 to 417 is disordered; it reads PSNQTQVHMRKNKARVRSTRSRPSKTGSSRGQKNLMSYFQPSSSGPQTSNLDLPSLGTL. Positions 366-381 are enriched in basic residues; it reads HMRKNKARVRSTRSRP. Residue K371 forms a Glycyl lysine isopeptide (Lys-Gly) (interchain with G-Cter in ubiquitin) linkage. The span at 382–410 shows a compositional bias: polar residues; the sequence is SKTGSSRGQKNLMSYFQPSSSGPQTSNLD. Residues 390 to 397 form a required for the interaction and colocalization with PCNA in nuclear foci in presence of oxidative-induced DNA damaging agents region; it reads QKNLMSYF. C465, H468, C491, and C505 together coordinate Zn(2+). The GRF-type zinc-finger motif lies at 465–514; that stretch reads CGGHREPCVMRTVKKPGPNLGRHFYMCARPQGPPTDPSSRCNFFLWSRPS.

This sequence belongs to the DNA repair enzymes AP/ExoA family. As to quaternary structure, interacts with PCNA; this interaction is triggered by reactive oxygen species and increased by misincorporation of uracil in nuclear DNA. It depends on Mg(2+) as a cofactor. Mn(2+) serves as cofactor. In terms of processing, ubiquitinated by the CUL9-RBX1 complex. Ubiquitinated by MKRN3 at Lys-371 leading to proteasomal degradation.

It localises to the nucleus. Its subcellular location is the cytoplasm. The protein resides in the mitochondrion. The enzyme catalyses Exonucleolytic cleavage in the 3'- to 5'-direction to yield nucleoside 5'-phosphates.. Its activity is regulated as follows. 3'-5' exonuclease activity is activated by sodium and manganese. 3'-5' exonuclease and 3'-phosphodiesterase activities are stimulated in presence of PCNA. Functions as a weak apurinic/apyrimidinic (AP) endodeoxyribonuclease in the DNA base excision repair (BER) pathway of DNA lesions induced by oxidative and alkylating agents. Initiates repair of AP sites in DNA by catalyzing hydrolytic incision of the phosphodiester backbone immediately adjacent to the damage, generating a single-strand break with 5'-deoxyribose phosphate and 3'-hydroxyl ends. Also displays double-stranded DNA 3'-5' exonuclease, 3'-phosphodiesterase activities. Shows robust 3'-5' exonuclease activity on 3'-recessed heteroduplex DNA and is able to remove mismatched nucleotides preferentially. Shows fairly strong 3'-phosphodiesterase activity involved in the removal of 3'-damaged termini formed in DNA by oxidative agents. In the nucleus functions in the PCNA-dependent BER pathway. Plays a role in reversing blocked 3' DNA ends, problematic lesions that preclude DNA synthesis. Required for somatic hypermutation (SHM) and DNA cleavage step of class switch recombination (CSR) of immunoglobulin genes. Required for proper cell cycle progression during proliferation of peripheral lymphocytes. This is DNA-(apurinic or apyrimidinic site) endonuclease 2 (APEX2) from Bos taurus (Bovine).